The chain runs to 215 residues: Eukaryotic translation initiation factor 4E-1 (215 aa).

Positions M1–A32 are disordered. Over residues E16–D27 the composition is skewed to acidic residues. 2 EIF4G-binding regions span residues H40–E43 and F50–H86. MRNA is bound by residues R58 to G63, K90, and W108 to E109. C113 and C151 are oxidised to a cystine. Residues H134 to Q143 are EIF4G-binding. MRNA contacts are provided by residues R158 to R163 and K203 to K207.

It belongs to the eukaryotic initiation factor 4E family. EIF4F is a multi-subunit complex, the composition of which varies with external and internal environmental conditions. It is composed of at least EIF4A, EIF4E and EIF4G. EIF4E is also known to interact with other partners. In higher plants two isoforms of EIF4F have been identified, named isoform EIF4F and isoform EIF(iso)4F. Isoform EIF4F has subunits p220 and p26, whereas isoform EIF(iso)4F has subunits p82 and p28. According to the redox status, the Cys-113-Cys-151 disulfide bridge may have a role in regulating protein function by affecting its ability to bind capped mRNA.

It localises to the nucleus. It is found in the cytoplasm. Its function is as follows. Component of the protein complex eIF4F, which is involved in the recognition of the mRNA cap, ATP-dependent unwinding of 5'-terminal secondary structure and recruitment of mRNA to the ribosome. Recognizes and binds the 7-methylguanosine-containing mRNA cap during an early step in the initiation of protein synthesis and facilitates ribosome binding by inducing the unwinding of the mRNAs secondary structures. In Triticum aestivum (Wheat), this protein is Eukaryotic translation initiation factor 4E-1.